The sequence spans 183 residues: UPF0397 protein EF_2154 (183 aa).

The next 5 helical transmembrane spans lie at 10-30, 44-64, 74-94, 115-135, and 147-167; these read IVAI…VVIP, FLAL…GLIG, GSAW…FGFA, IFQA…LDIL, and QGVF…TLLM.

It belongs to the UPF0397 family.

The protein resides in the cell membrane. This is UPF0397 protein EF_2154 from Enterococcus faecalis (strain ATCC 700802 / V583).